The chain runs to 301 residues: HTH-type transcriptional regulator EstR (301 aa).

An HTH lysR-type domain is found at 5 to 62 (PSLRQLSYLVTLSETLHFTEAARRSFVTQSTLSGGIMELERLLGGVLVERDRQNVRLT). Residues 22-41 (FTEAARRSFVTQSTLSGGIM) constitute a DNA-binding region (H-T-H motif).

It belongs to the LysR transcriptional regulatory family.

Functionally, transcriptional regulator of the esterase operon. The chain is HTH-type transcriptional regulator EstR (estR) from Acinetobacter baylyi (strain ATCC 33305 / BD413 / ADP1).